The sequence spans 956 residues: Bromodomain testis-specific protein (956 aa).

A Bromo 1 domain is found at 26 to 132 (RLTNQLQFLQ…KLFMQKLSQM (107 aa)). Position 186 is a phosphoserine (serine 186). A Nuclear localization signal motif is present at residues 208–219 (KGVKRRADTTTP). The interval 210 to 239 (VKRRADTTTPTTSIAKASSESPPTLRETKP) is disordered. The span at 216–231 (TTTPTTSIAKASSESP) shows a compositional bias: polar residues. Residues 266-375 (VKVTEQLKHC…DVFELHFAKI (110 aa)) form the Bromo 2 domain. 4 disordered regions span residues 391–420 (NSAQALSRESSSEASSGDASSEDSEDERVQ), 442–508 (VPLR…PMNY), 607–747 (NQLN…HSQQ), and 859–934 (LEHN…RREA). A compositionally biased stretch (low complexity) spans 392–409 (SAQALSRESSSEASSGDA). Positions 417-442 (ERVQHLAKLQEQLNAVHQQLQVLSQV) form a coiled coil. Positions 445–463 (RKLKKKNEKSKRAPKRKKV) are enriched in basic residues. The region spanning 496 to 578 (KSEEEDNAKP…ACLRKRSLKP (83 aa)) is the NET domain. Pro residues predominate over residues 625 to 640 (PPPPPPPPPPPPPPPE). A compositionally biased stretch (low complexity) spans 649 to 688 (DSSSSSGSGSGSSSSSSGSSSSSSSSGSASSSSDSSSSDS). The segment covering 714–724 (KQIQSSVQDIT) has biased composition (polar residues). Residues 844–940 (EKEVKARTQE…RREAMAGTID (97 aa)) adopt a coiled-coil conformation. Composition is skewed to basic and acidic residues over residues 859–874 (LEHNAKDPKVSQENQR) and 915–934 (LLKDRNLAREKEQERRRREA).

Belongs to the BET family. As to quaternary structure, interacts with SMARCE1. Interacts with mRNA splicing machinery proteins SRSF2, DDX5, HNRNPK and TARDBP. Interacts with the acetylated N-terminus of histone H1, H2, H3 and H4. Interacts with P-TEFb components CDK9 and CCNT1/cyclin-T1. Post-translationally, ubiquitinated in a SPOP-dependent manner, leading to proteasomal degradation. Testis-specific. Expressed in germinal cells from the early meiotic (pachytene) spermatocytes and during spermiogenesis in the round and elongating spermatids until the condensed late spermatids. No expression seen in spermatogonia.

Its subcellular location is the nucleus. Its function is as follows. Testis-specific chromatin protein that specifically binds histone H4 acetylated at 'Lys-5' and 'Lys-8' (H4K5ac and H4K8ac, respectively) and plays a key role in spermatogenesis. Required in late pachytene spermatocytes: plays a role in meiotic and post-meiotic cells by binding to acetylated histones at the promoter of specific meiotic and post-meiotic genes, facilitating their activation at the appropriate time. In the post-meiotic phase of spermatogenesis, binds to hyperacetylated histones and participates in their general removal from DNA. Also recognizes and binds a subset of butyrylated histones: able to bind histone H4 butyrylated at 'Lys-8' (H4K8ac), while it is not able to bind H4 butyrylated at 'Lys-5' (H4K5ac). Also acts as a component of the splicing machinery in pachytene spermatocytes and round spermatids and participates in 3'-UTR truncation of specific mRNAs in post-meiotic spermatids. Required for chromocenter organization, a structure comprised of peri-centromeric heterochromatin. This is Bromodomain testis-specific protein (Brdt) from Mus musculus (Mouse).